Reading from the N-terminus, the 258-residue chain is HTH-type transcriptional repressor GlcR (258 aa).

Residues 3 to 58 (QEERLVAILDFLKQHNRITTEQICTLLQVSRDTARRDLVKLEEQNAIIRTRGGAIL) enclose the HTH deoR-type domain. A DNA-binding region (H-T-H motif) is located at residues 20 to 39 (ITTEQICTLLQVSRDTARRD).

Functionally, plays a role in carbon catabolite repression (CCR). Specifically required for transcriptional repression of the levanase operon by glucose but not by other sugars. The chain is HTH-type transcriptional repressor GlcR (glcR) from Bacillus subtilis (strain 168).